The primary structure comprises 491 residues: Probable ribonuclease FAU-1 (491 aa).

Belongs to the FAU-1 family.

Its function is as follows. Probable RNase involved in rRNA stability through maturation and/or degradation of precursor rRNAs. Binds to RNA in loop regions with AU-rich sequences. This is Probable ribonuclease FAU-1 from Thermofilum pendens (strain DSM 2475 / Hrk 5).